A 247-amino-acid chain; its full sequence is MRLLAPAFKFHFKGGRRTMILSVLSSPALVSGLMVVRAKNPVHSVLFPILVFCDTSGLLILLGLDFSAMISPVVHIGAIAVSFLFVVMMFNIQIAEIHEEVLRYLPVSGIIGLIFWWEMFFILDNETIPLLPTHRNTTSLRYTVYAGKVRSWTNLETLGNLLYTYYSVWFLVSSLILLVAMIGAIVLTMHRTTKVKRQDVFRRNALDSRSHIMNRTISPFGHSHRRSFSSGAGGPPDNYKETFKMWI.

5 consecutive transmembrane segments (helical) span residues 18 to 38, 44 to 64, 70 to 90, 104 to 124, and 168 to 188; these read TMIL…VVRA, SVLF…LLGL, ISPV…VMMF, YLPV…FILD, and VWFL…IVLT.

The protein belongs to the complex I subunit 6 family.

The protein localises to the mitochondrion membrane. The enzyme catalyses a ubiquinone + NADH + 5 H(+)(in) = a ubiquinol + NAD(+) + 4 H(+)(out). Its function is as follows. Core subunit of the mitochondrial membrane respiratory chain NADH dehydrogenase (Complex I) that is believed to belong to the minimal assembly required for catalysis. Complex I functions in the transfer of electrons from NADH to the respiratory chain. The immediate electron acceptor for the enzyme is believed to be ubiquinone. In Triticum aestivum (Wheat), this protein is NADH-ubiquinone oxidoreductase chain 6 (ND6).